We begin with the raw amino-acid sequence, 352 residues long: Biotin synthase (352 aa).

Residues 44–262 (NRVQVSTLLS…LAVARILMPK (219 aa)) form the Radical SAM core domain. Cysteine 59, cysteine 63, and cysteine 66 together coordinate [4Fe-4S] cluster. [2Fe-2S] cluster is bound by residues cysteine 103, cysteine 134, cysteine 194, and arginine 266.

It belongs to the radical SAM superfamily. Biotin synthase family. Homodimer. [4Fe-4S] cluster serves as cofactor. It depends on [2Fe-2S] cluster as a cofactor.

It carries out the reaction (4R,5S)-dethiobiotin + (sulfur carrier)-SH + 2 reduced [2Fe-2S]-[ferredoxin] + 2 S-adenosyl-L-methionine = (sulfur carrier)-H + biotin + 2 5'-deoxyadenosine + 2 L-methionine + 2 oxidized [2Fe-2S]-[ferredoxin]. It functions in the pathway cofactor biosynthesis; biotin biosynthesis; biotin from 7,8-diaminononanoate: step 2/2. In terms of biological role, catalyzes the conversion of dethiobiotin (DTB) to biotin by the insertion of a sulfur atom into dethiobiotin via a radical-based mechanism. This is Biotin synthase from Pseudomonas syringae pv. syringae (strain B728a).